The chain runs to 219 residues: Redox-sensing transcriptional repressor Rex (219 aa).

The H-T-H motif DNA-binding region spans 18–57 (LYYRFIQSLYNSGKLRVSSAELSEAVKVDSATIRRDFSYF). 92 to 97 (GVGHLG) serves as a coordination point for NAD(+).

It belongs to the transcriptional regulatory Rex family. Homodimer.

The protein resides in the cytoplasm. Modulates transcription in response to changes in cellular NADH/NAD(+) redox state. This chain is Redox-sensing transcriptional repressor Rex, found in Exiguobacterium sibiricum (strain DSM 17290 / CCUG 55495 / CIP 109462 / JCM 13490 / 255-15).